A 213-amino-acid polypeptide reads, in one-letter code: Major fimbrial subunit (213 aa).

A signal peptide spans 1 to 20; it reads MKKTLLGSLILLAFAGNVQA. Residues Cys41 and Cys81 are joined by a disulfide bond.

Belongs to the fimbrial protein family.

It is found in the fimbrium. Functionally, mediates adherence to oropharyngeal epithelial cells. Helps the airway colonization process. The protein is Major fimbrial subunit (hifA) of Haemophilus influenzae.